Here is a 586-residue protein sequence, read N- to C-terminus: Phosphoenolpyruvate-protein phosphotransferase (586 aa).

The active-site Tele-phosphohistidine intermediate is the His-201. Phosphoenolpyruvate-binding residues include Arg-308 and Arg-345. Glu-446 and Asp-470 together coordinate Mg(2+). Residues 469–470 (ND) and Arg-480 contribute to the phosphoenolpyruvate site. The Proton donor role is filled by Cys-517.

Belongs to the PEP-utilizing enzyme family. As to quaternary structure, homodimer. Requires Mg(2+) as cofactor.

Its subcellular location is the cytoplasm. It catalyses the reaction L-histidyl-[protein] + phosphoenolpyruvate = N(pros)-phospho-L-histidyl-[protein] + pyruvate. Its function is as follows. General (non sugar-specific) component of the phosphoenolpyruvate-dependent sugar phosphotransferase system (sugar PTS). This major carbohydrate active-transport system catalyzes the phosphorylation of incoming sugar substrates concomitantly with their translocation across the cell membrane. Enzyme I transfers the phosphoryl group from phosphoenolpyruvate (PEP) to the phosphoryl carrier protein (HPr). This is Phosphoenolpyruvate-protein phosphotransferase from Cupriavidus necator (strain ATCC 17699 / DSM 428 / KCTC 22496 / NCIMB 10442 / H16 / Stanier 337) (Ralstonia eutropha).